The sequence spans 289 residues: Phosphatidylserine decarboxylase proenzyme (289 aa).

Residues D92, H149, and S254 each act as charge relay system; for autoendoproteolytic cleavage activity in the active site. The active-site Schiff-base intermediate with substrate; via pyruvic acid; for decarboxylase activity is the S254. A Pyruvic acid (Ser); by autocatalysis modification is found at S254.

It belongs to the phosphatidylserine decarboxylase family. PSD-B subfamily. Prokaryotic type I sub-subfamily. As to quaternary structure, heterodimer of a large membrane-associated beta subunit and a small pyruvoyl-containing alpha subunit. It depends on pyruvate as a cofactor. Is synthesized initially as an inactive proenzyme. Formation of the active enzyme involves a self-maturation process in which the active site pyruvoyl group is generated from an internal serine residue via an autocatalytic post-translational modification. Two non-identical subunits are generated from the proenzyme in this reaction, and the pyruvate is formed at the N-terminus of the alpha chain, which is derived from the carboxyl end of the proenzyme. The autoendoproteolytic cleavage occurs by a canonical serine protease mechanism, in which the side chain hydroxyl group of the serine supplies its oxygen atom to form the C-terminus of the beta chain, while the remainder of the serine residue undergoes an oxidative deamination to produce ammonia and the pyruvoyl prosthetic group on the alpha chain. During this reaction, the Ser that is part of the protease active site of the proenzyme becomes the pyruvoyl prosthetic group, which constitutes an essential element of the active site of the mature decarboxylase.

The protein localises to the cell membrane. It carries out the reaction a 1,2-diacyl-sn-glycero-3-phospho-L-serine + H(+) = a 1,2-diacyl-sn-glycero-3-phosphoethanolamine + CO2. Its pathway is phospholipid metabolism; phosphatidylethanolamine biosynthesis; phosphatidylethanolamine from CDP-diacylglycerol: step 2/2. Functionally, catalyzes the formation of phosphatidylethanolamine (PtdEtn) from phosphatidylserine (PtdSer). The polypeptide is Phosphatidylserine decarboxylase proenzyme (Pseudomonas paraeruginosa (strain DSM 24068 / PA7) (Pseudomonas aeruginosa (strain PA7))).